The sequence spans 330 residues: ADP-L-glycero-D-manno-heptose-6-epimerase (330 aa).

NADP(+) is bound by residues 11–12, 32–33, Gln-39, Gln-54, 75–79, and Asn-92; these read FI, DD, and QGACA. The Proton acceptor role is filled by Tyr-139. Position 143 (Lys-143) interacts with NADP(+). Position 168 (Asn-168) interacts with substrate. Residues Val-169 and Lys-177 each contribute to the NADP(+) site. Lys-177 functions as the Proton acceptor in the catalytic mechanism. Substrate is bound by residues Arg-179, His-186, 200–203, Arg-213, and Tyr-292; that span reads FGEH.

It belongs to the NAD(P)-dependent epimerase/dehydratase family. HldD subfamily. In terms of assembly, homopentamer. The cofactor is NADP(+).

The enzyme catalyses ADP-D-glycero-beta-D-manno-heptose = ADP-L-glycero-beta-D-manno-heptose. It functions in the pathway nucleotide-sugar biosynthesis; ADP-L-glycero-beta-D-manno-heptose biosynthesis; ADP-L-glycero-beta-D-manno-heptose from D-glycero-beta-D-manno-heptose 7-phosphate: step 4/4. Its function is as follows. Catalyzes the interconversion between ADP-D-glycero-beta-D-manno-heptose and ADP-L-glycero-beta-D-manno-heptose via an epimerization at carbon 6 of the heptose. This Pseudomonas paraeruginosa (strain DSM 24068 / PA7) (Pseudomonas aeruginosa (strain PA7)) protein is ADP-L-glycero-D-manno-heptose-6-epimerase.